Consider the following 528-residue polypeptide: Phosphoenolpyruvate carboxykinase (ATP) (528 aa).

Residues R56, Y192, and K198 each coordinate substrate. ATP contacts are provided by residues K198, H217, and 233–241 (GLSGTGKTT). 2 residues coordinate Mn(2+): K198 and H217. Position 254 (D254) interacts with Mn(2+). ATP is bound by residues E282, R319, and T444. A substrate-binding site is contributed by R319.

This sequence belongs to the phosphoenolpyruvate carboxykinase (ATP) family. The cofactor is Mn(2+).

The protein localises to the cytoplasm. It carries out the reaction oxaloacetate + ATP = phosphoenolpyruvate + ADP + CO2. It participates in carbohydrate biosynthesis; gluconeogenesis. Its function is as follows. Involved in the gluconeogenesis. Catalyzes the conversion of oxaloacetate (OAA) to phosphoenolpyruvate (PEP) through direct phosphoryl transfer between the nucleoside triphosphate and OAA. In Geobacillus thermodenitrificans (strain NG80-2), this protein is Phosphoenolpyruvate carboxykinase (ATP).